A 556-amino-acid polypeptide reads, in one-letter code: Formate--tetrahydrofolate ligase 1 (556 aa).

Residue 65–72 (TPAGEGKS) coordinates ATP.

It belongs to the formate--tetrahydrofolate ligase family.

The catalysed reaction is (6S)-5,6,7,8-tetrahydrofolate + formate + ATP = (6R)-10-formyltetrahydrofolate + ADP + phosphate. It participates in one-carbon metabolism; tetrahydrofolate interconversion. The sequence is that of Formate--tetrahydrofolate ligase 1 from Streptococcus pyogenes serotype M2 (strain MGAS10270).